The primary structure comprises 461 residues: D-phenylhydantoinase (461 aa).

3 residues coordinate a divalent metal cation: histidine 59, histidine 61, and lysine 151. Position 151 is an N6-carboxylysine (lysine 151). Residue tyrosine 156 coordinates substrate. 2 residues coordinate a divalent metal cation: histidine 182 and histidine 239. A substrate-binding site is contributed by serine 286. An a divalent metal cation-binding site is contributed by aspartate 313. Residue asparagine 335 coordinates substrate.

This sequence belongs to the metallo-dependent hydrolases superfamily. Hydantoinase/dihydropyrimidinase family. Homotetramer. A divalent metal cation is required as a cofactor. Carboxylation allows a single lysine to coordinate two divalent metal cations.

It catalyses the reaction D-5-phenylhydantoin + H2O = N-carbamoyl-D-phenylglycine + H(+). Its function is as follows. Catalyzes the stereospecific hydrolysis of the cyclic amide bond of D-hydantoin derivatives with an aromatic side chains at the 5'-position. Has no activity on dihydropyrimidines. The physiological function is unknown. This Shigella boydii serotype 4 (strain Sb227) protein is D-phenylhydantoinase.